The sequence spans 132 residues: METDTLLLWVLLLWVPGSTGDIVLTQSPASLAVSLGQRATISCRASKSVNTYGNSFMZWYZZKPGZPPKLLIYRASNLZSGIPARFSGSGSRTBFTLTIBPVZABDVATYFCZZSBZBPWTFGSGTKLEIKR.

Residues 1 to 20 (METDTLLLWVLLLWVPGSTG) form the signal peptide. A framework-1 region spans residues 21–43 (DIVLTQSPASLAVSLGQRATISC). Cysteines 43 and 112 form a disulfide. A complementarity-determining-1 region spans residues 44–58 (RASKSVNTYGNSFMZ). The segment at 59–73 (WYZZKPGZPPKLLIY) is framework-2. The complementarity-determining-2 stretch occupies residues 74–80 (RASNLZS). The segment at 81 to 112 (GIPARFSGSGSRTBFTLTIBPVZABDVATYFC) is framework-3. The segment at 113 to 121 (ZZSBZBPWT) is complementarity-determining-3. Residues 122–131 (FGSGTKLEIK) are framework-4.

The polypeptide is Ig kappa chain V-III region MOPC 321 (Mus musculus (Mouse)).